Consider the following 81-residue polypeptide: MSHSVKIYDTCIGCTQCVRACPLDVLEMVPWDGCKAGQIASSPRTEDCVGCKRCETACPTDFLSVRVYLGDETTRSMGLAY.

2 consecutive 4Fe-4S ferredoxin-type domains span residues 2–31 (SHSV…MVPW) and 37–68 (GQIA…VRVY). 8 residues coordinate [4Fe-4S] cluster: C11, C14, C17, C21, C48, C51, C54, and C58.

The cyanobacterial PSI reaction center is composed of one copy each of PsaA,B,C,D,E,F,I,J,K,L,M and X, and forms trimeric complexes. Requires [4Fe-4S] cluster as cofactor.

Its subcellular location is the cellular thylakoid membrane. It catalyses the reaction reduced [plastocyanin] + hnu + oxidized [2Fe-2S]-[ferredoxin] = oxidized [plastocyanin] + reduced [2Fe-2S]-[ferredoxin]. In terms of biological role, apoprotein for the two 4Fe-4S centers FA and FB of photosystem I (PSI); essential for photochemical activity. FB is the terminal electron acceptor of PSI, donating electrons to ferredoxin. The C-terminus interacts with PsaA/B/D and helps assemble the protein into the PSI complex. Required for binding of PsaD and PsaE to PSI. PSI is a plastocyanin/cytochrome c6-ferredoxin oxidoreductase, converting photonic excitation into a charge separation, which transfers an electron from the donor P700 chlorophyll pair to the spectroscopically characterized acceptors A0, A1, FX, FA and FB in turn. The chain is Photosystem I iron-sulfur center from Prochlorococcus marinus (strain SARG / CCMP1375 / SS120).